A 263-amino-acid chain; its full sequence is Acyl-[acyl-carrier-protein]--UDP-N-acetylglucosamine O-acyltransferase (263 aa).

It belongs to the transferase hexapeptide repeat family. LpxA subfamily. As to quaternary structure, homotrimer.

The protein resides in the cytoplasm. It catalyses the reaction a (3R)-hydroxyacyl-[ACP] + UDP-N-acetyl-alpha-D-glucosamine = a UDP-3-O-[(3R)-3-hydroxyacyl]-N-acetyl-alpha-D-glucosamine + holo-[ACP]. It functions in the pathway glycolipid biosynthesis; lipid IV(A) biosynthesis; lipid IV(A) from (3R)-3-hydroxytetradecanoyl-[acyl-carrier-protein] and UDP-N-acetyl-alpha-D-glucosamine: step 1/6. Involved in the biosynthesis of lipid A, a phosphorylated glycolipid that anchors the lipopolysaccharide to the outer membrane of the cell. This Xanthomonas oryzae pv. oryzae (strain PXO99A) protein is Acyl-[acyl-carrier-protein]--UDP-N-acetylglucosamine O-acyltransferase.